The sequence spans 63 residues: Small ribosomal subunit protein uS14 (63 aa).

4 residues coordinate Zn(2+): Cys26, Cys29, Cys42, and Cys45.

This sequence belongs to the universal ribosomal protein uS14 family. Zinc-binding uS14 subfamily. Part of the 30S ribosomal subunit. Contacts proteins S3 and S10. Zn(2+) serves as cofactor.

In terms of biological role, binds 16S rRNA, required for the assembly of 30S particles and may also be responsible for determining the conformation of the 16S rRNA at the A site. This chain is Small ribosomal subunit protein uS14, found in Gloeobacter violaceus (strain ATCC 29082 / PCC 7421).